A 228-amino-acid polypeptide reads, in one-letter code: Homeobox protein Hox-B6a (228 aa).

An Antp-type hexapeptide motif is present at residues 132–137 (VYPWMQ). The segment at residues 150–209 (GRRGRQTYTRYQTLELEKEFHFNRYLTRRRRIEIAHALCLTERQIKIWFQNRRMKWKKEN) is a DNA-binding region (homeobox).

This sequence belongs to the Antp homeobox family.

It is found in the nucleus. Its function is as follows. Sequence-specific transcription factor which is part of a developmental regulatory system that provides cells with specific positional identities on the anterior-posterior axis. This chain is Homeobox protein Hox-B6a (hoxb6a), found in Danio rerio (Zebrafish).